Here is a 159-residue protein sequence, read N- to C-terminus: Small ribosomal subunit protein uS7 (159 aa).

Belongs to the universal ribosomal protein uS7 family. Part of the 30S ribosomal subunit. Contacts proteins S9 and S11.

Functionally, one of the primary rRNA binding proteins, it binds directly to 16S rRNA where it nucleates assembly of the head domain of the 30S subunit. Is located at the subunit interface close to the decoding center, probably blocks exit of the E-site tRNA. The sequence is that of Small ribosomal subunit protein uS7 from Rickettsia felis (strain ATCC VR-1525 / URRWXCal2) (Rickettsia azadi).